We begin with the raw amino-acid sequence, 287 residues long: MEMO1 family protein MJ0403 (287 aa).

Belongs to the MEMO1 family.

The protein is MEMO1 family protein MJ0403 of Methanocaldococcus jannaschii (strain ATCC 43067 / DSM 2661 / JAL-1 / JCM 10045 / NBRC 100440) (Methanococcus jannaschii).